The sequence spans 261 residues: Lysoplasmalogenase (261 aa).

Helical transmembrane passes span 29–49, 65–85, 90–107, 111–133, 146–166, 172–192, 197–217, and 227–247; these read GWVV…VIAL, PAFK…HPIG, WLVP…LLAI, TWAF…GALL, VAAV…FWPH, LTIP…TALL, TIWT…IGIG, and AVPI…GFFF.

Belongs to the TMEM86 family.

The protein resides in the cell membrane. It catalyses the reaction a 1-O-(1Z-alkenyl)-sn-glycero-3-phosphocholine + H2O = a 2,3-saturated aldehyde + sn-glycerol 3-phosphocholine. It carries out the reaction a 1-O-(1Z-alkenyl)-sn-glycero-3-phosphoethanolamine + H2O = a 2,3-saturated aldehyde + sn-glycero-3-phosphoethanolamine. In terms of biological role, specifically hydrolyzes the vinyl ether bond of lysoplasmenylcholine (pLPC) and lysoplasmenylethanolamine (pLPE) to release a fatty aldehyde and glycerophospho-choline or glycerophospho-ethanolamine. The polypeptide is Lysoplasmalogenase (Mycobacterium bovis (strain ATCC BAA-935 / AF2122/97)).